We begin with the raw amino-acid sequence, 259 residues long: Dihydroorotate dehydrogenase B (NAD(+)), electron transfer subunit (259 aa).

The FAD-binding FR-type domain occupies 2–102 (MQKQNMIVVN…LGPLGHGFPV (101 aa)). FAD-binding positions include 53-56 (RPIS), 70-72 (LYR), and 77-78 (GT). The [2Fe-2S] cluster site is built by Cys221, Cys226, Cys229, and Cys246.

This sequence belongs to the PyrK family. As to quaternary structure, heterotetramer of 2 PyrK and 2 PyrD type B subunits. It depends on [2Fe-2S] cluster as a cofactor. FAD serves as cofactor.

It functions in the pathway pyrimidine metabolism; UMP biosynthesis via de novo pathway; orotate from (S)-dihydroorotate (NAD(+) route): step 1/1. In terms of biological role, responsible for channeling the electrons from the oxidation of dihydroorotate from the FMN redox center in the PyrD type B subunit to the ultimate electron acceptor NAD(+). This chain is Dihydroorotate dehydrogenase B (NAD(+)), electron transfer subunit, found in Bacillus cereus (strain G9842).